The chain runs to 764 residues: MRPTPLLRLALLLVLPSSLWGERCPSPPCECRQEDDFRVTCKDIQRIPSLPPSTQTLKFIETHLKTIPSRAFSNLPNISRIYLSIDATLQQLESHSFYNLSKVTHIEIRNTRSLTYIDSGALKELPLLKFLGIFNTGLRVFPDLTKIYSTDVFFILEITDNPYMTSVPANAFQGLSNETLTLKLYNNGFTSIQGHAFNGTKLDAVYLNKNKYLTVIDQDAFAGVYSGPTLLDISYTSVTALPSKGLEHLKELIARNTWTLKKLPLSLSFLHLTRADLSYPSHCCAFKNQKNIRGILQSLMCNESSIWGLRQRKSASALNGPFYQEYEEDLGDGSAGYKENSKFQDTHSNSHYYVFFEDQEDEIIGFGQELKNPQEETLQAFDNHYDYTVCGGSEEMVCTPKSDEFNPCEDIMGYKFLRIVVWFVSLLALLGNVFVLVILLTSHYKLTVPRFLMCNLAFADFCMGLYLLLIASVDLYTQSEYYNHAIDWQTGPGCNTAGFFTVFASELSVYTLTVITLERWYAITFAMHLDRKIRLWHAYVIMLGGWVCCFLLALLPLVGISSYAKVSICLPMDTETPLALAYIILVLLLNIIAFIIVCACYVKIYITVRNPHYNPGDKDTRIAKRMAVLIFTDFMCMAPISFYALSALMNKPLITVTNSKILLVLFYPLNSCANPFLYAIFTKAFQRDVFMLLSKFGICKRQAQAYRGQRVSSKNSTGIRVQKVPPDVRQSLPNVQDDYELLGNSHLTPKQQDQTSKEYKQTVL.

An N-terminal signal peptide occupies residues 1-21; sequence MRPTPLLRLALLLVLPSSLWG. Residues 22–413 lie on the Extracellular side of the membrane; sequence ERCPSPPCEC…EFNPCEDIMG (392 aa). C31 and C41 are oxidised to a cystine. Residues 51 to 74 form an LRR 1 repeat; that stretch reads PPSTQTLKFIETHLKTIPSRAFSN. 2 N-linked (GlcNAc...) asparagine glycosylation sites follow: N77 and N99. LRR repeat units follow at residues 125–150, 152–174, 176–199, 201–223, and 225–248; these read LPLLKFLGIFNTGLRVFPDLTKIYST, VFFILEITDNPYMTSVPANAFQG, SNETLTLKLYNNGFTSIQGHAFNG, KLDAVYLNKNKYLTVIDQDAFAG, and YSGPTLLDISYTSVTALPSKGLEH. 2 N-linked (GlcNAc...) asparagine glycosylation sites follow: N177 and N198. The N-linked (GlcNAc...) asparagine glycan is linked to N302. Sulfotyrosine is present on Y385. Residues 414–441 form a helical membrane-spanning segment; it reads YKFLRIVVWFVSLLALLGNVFVLVILLT. Residues 442-450 lie on the Cytoplasmic side of the membrane; that stretch reads SHYKLTVPR. A helical membrane pass occupies residues 451 to 473; it reads FLMCNLAFADFCMGLYLLLIASV. Residues 474-494 are Extracellular-facing; the sequence is DLYTQSEYYNHAIDWQTGPGC. C494 and C569 form a disulfide bridge. A helical membrane pass occupies residues 495–517; the sequence is NTAGFFTVFASELSVYTLTVITL. Over 518-537 the chain is Cytoplasmic; sequence ERWYAITFAMHLDRKIRLWH. The helical transmembrane segment at 538-560 threads the bilayer; sequence AYVIMLGGWVCCFLLALLPLVGI. The Extracellular portion of the chain corresponds to 561–580; the sequence is SSYAKVSICLPMDTETPLAL. The helical transmembrane segment at 581-602 threads the bilayer; that stretch reads AYIILVLLLNIIAFIIVCACYV. The Cytoplasmic portion of the chain corresponds to 603–625; the sequence is KIYITVRNPHYNPGDKDTRIAKR. The helical transmembrane segment at 626–649 threads the bilayer; sequence MAVLIFTDFMCMAPISFYALSALM. Over 650–660 the chain is Extracellular; the sequence is NKPLITVTNSK. The chain crosses the membrane as a helical span at residues 661-682; the sequence is ILLVLFYPLNSCANPFLYAIFT. Residues 683–764 lie on the Cytoplasmic side of the membrane; the sequence is KAFQRDVFML…TSKEYKQTVL (82 aa). The PDZ-binding motif lies at 762–764; that stretch reads TVL.

The protein belongs to the G-protein coupled receptor 1 family. FSH/LSH/TSH subfamily. As to quaternary structure, interacts with heterodimer GPHA2:GPHB5; this interaction stimulates cAMP production. Interacts (via the PDZ-binding motif) with SCRIB; regulates TSHR trafficking and function. Glycosylated. In terms of processing, sulfated. Sulfation on Tyr-385 plays a role in thyrotropin receptor binding and activation.

Its subcellular location is the cell membrane. The protein resides in the basolateral cell membrane. Functionally, receptor for the thyroid-stimulating hormone (TSH) or thyrotropin. Also acts as a receptor for the heterodimeric glycoprotein hormone (GPHA2:GPHB5) or thyrostimulin. The activity of this receptor is mediated by G proteins which activate adenylate cyclase. Plays a central role in controlling thyroid cell metabolism. In Ovis aries (Sheep), this protein is Thyrotropin receptor (TSHR).